Here is a 469-residue protein sequence, read N- to C-terminus: Arginine biosynthesis bifunctional protein ArgJ, mitochondrial (469 aa).

Substrate-binding residues include Thr-199, Lys-228, Thr-239, Glu-325, Asn-464, and Thr-469. Catalysis depends on Thr-239, which acts as the Nucleophile.

Belongs to the ArgJ family. Heterodimer of an alpha and a beta chain. In terms of processing, the alpha and beta chains are autoproteolytically processed from a single precursor protein within the mitochondrion.

Its subcellular location is the mitochondrion matrix. It catalyses the reaction N(2)-acetyl-L-ornithine + L-glutamate = N-acetyl-L-glutamate + L-ornithine. The enzyme catalyses L-glutamate + acetyl-CoA = N-acetyl-L-glutamate + CoA + H(+). Its pathway is amino-acid biosynthesis; L-arginine biosynthesis; L-ornithine and N-acetyl-L-glutamate from L-glutamate and N(2)-acetyl-L-ornithine (cyclic): step 1/1. It participates in amino-acid biosynthesis; L-arginine biosynthesis; N(2)-acetyl-L-ornithine from L-glutamate: step 1/4. Catalyzes two activities which are involved in the cyclic version of arginine biosynthesis: the synthesis of acetylglutamate from glutamate and acetyl-CoA, and of ornithine by transacetylation between acetylornithine and glutamate. The polypeptide is Arginine biosynthesis bifunctional protein ArgJ, mitochondrial (Neurospora crassa (strain ATCC 24698 / 74-OR23-1A / CBS 708.71 / DSM 1257 / FGSC 987)).